A 369-amino-acid polypeptide reads, in one-letter code: Serpentine receptor class epsilon-2 (369 aa).

The Extracellular portion of the chain corresponds to 1–20; sequence MLIQYHKISNNDPNRIQLLS. The helical transmembrane segment at 21–41 threads the bilayer; the sequence is MIFCEIILLIFELFEFAAIIF. The Cytoplasmic portion of the chain corresponds to 42-55; it reads NMSRYQFHFNLKVV. The chain crosses the membrane as a helical span at residues 56–76; the sequence is VGYAIFAYWFDIIARITIAFF. The Extracellular portion of the chain corresponds to 77-118; that stretch reads EIGLFNLDDQTIAVETEKLPWNYKNMFFMLLFCCSTYRVYFM. A helical transmembrane segment spans residues 119–139; that stretch reads FLICSVTLLLAVERFLATIWV. Over 140-148 the chain is Cytoplasmic; that stretch reads STYESVQHK. A helical transmembrane segment spans residues 149–169; it reads WVSIVLTSTNSIAGIFGSLLF. The Extracellular portion of the chain corresponds to 170–178; it reads HYELIFDTA. Residues 179–199 traverse the membrane as a helical segment; sequence VWCSLGLCFNFVSIFLYVILF. The Cytoplasmic portion of the chain corresponds to 200–234; sequence NSNKSKIELCQTREITQSYTLSLRFQLNENLKIMN. The helical transmembrane segment at 235–255 threads the bilayer; the sequence is WIKNSILVVTCFNTLLAGFLI. Residues 256–274 are Extracellular-facing; that stretch reads ASNNEYLKNDYPVLVKCCH. A helical membrane pass occupies residues 275–295; sequence TFLNLGIAIYAQVVFFVAILA. Residues 296–369 lie on the Cytoplasmic side of the membrane; it reads DRHFRTYFLR…VAKKKRFWRV (74 aa).

This sequence belongs to the nematode receptor-like protein sre family.

The protein resides in the cell membrane. This chain is Serpentine receptor class epsilon-2 (sre-2), found in Caenorhabditis elegans.